A 218-amino-acid polypeptide reads, in one-letter code: Glycerol-3-phosphate acyltransferase (218 aa).

6 helical membrane-spanning segments follow: residues 3 to 23 (FAIFAFLSFISGSIPFGYWIA), 53 to 73 (GFPVLVLDVAKGIFPVYLSGI), 82 to 102 (FQLACGVLAVLGHMFSPFLGF), 112 to 132 (LGVFLVLTPIACFGAIFVFLV), 142 to 162 (IGSIFASLTLPLVYAFSSILL), and 166 to 186 (EVSYWILGTMVFISIGIILTH).

It belongs to the PlsY family. In terms of assembly, probably interacts with PlsX.

The protein resides in the cell inner membrane. It carries out the reaction an acyl phosphate + sn-glycerol 3-phosphate = a 1-acyl-sn-glycero-3-phosphate + phosphate. It functions in the pathway lipid metabolism; phospholipid metabolism. Catalyzes the transfer of an acyl group from acyl-phosphate (acyl-PO(4)) to glycerol-3-phosphate (G3P) to form lysophosphatidic acid (LPA). This enzyme utilizes acyl-phosphate as fatty acyl donor, but not acyl-CoA or acyl-ACP. This is Glycerol-3-phosphate acyltransferase from Leptospira borgpetersenii serovar Hardjo-bovis (strain JB197).